The primary structure comprises 286 residues: uncharacterized protein (286 aa).

The tat-type signal signal peptide spans 1 to 31 (MKKMSRRQFLKGMFGALAAGALTAGGGYGYA). A divalent metal cation contacts are provided by Asp-65, His-67, Asp-97, Asn-130, His-221, and His-223.

It belongs to the metallophosphoesterase superfamily. A divalent metal cation is required as a cofactor. Predicted to be exported by the Tat system. The position of the signal peptide cleavage has not been experimentally proven.

This is an uncharacterized protein from Bacillus subtilis (strain 168).